Consider the following 119-residue polypeptide: Large ribosomal subunit protein uL22 (119 aa).

It belongs to the universal ribosomal protein uL22 family. Part of the 50S ribosomal subunit.

Functionally, this protein binds specifically to 23S rRNA; its binding is stimulated by other ribosomal proteins, e.g. L4, L17, and L20. It is important during the early stages of 50S assembly. It makes multiple contacts with different domains of the 23S rRNA in the assembled 50S subunit and ribosome. Its function is as follows. The globular domain of the protein is located near the polypeptide exit tunnel on the outside of the subunit, while an extended beta-hairpin is found that lines the wall of the exit tunnel in the center of the 70S ribosome. This Rickettsia conorii (strain ATCC VR-613 / Malish 7) protein is Large ribosomal subunit protein uL22.